The following is a 122-amino-acid chain: Large ribosomal subunit protein uL14 (122 aa).

This sequence belongs to the universal ribosomal protein uL14 family. Part of the 50S ribosomal subunit. Forms a cluster with proteins L3 and L19. In the 70S ribosome, L14 and L19 interact and together make contacts with the 16S rRNA in bridges B5 and B8.

In terms of biological role, binds to 23S rRNA. Forms part of two intersubunit bridges in the 70S ribosome. This is Large ribosomal subunit protein uL14 from Cytophaga hutchinsonii (strain ATCC 33406 / DSM 1761 / CIP 103989 / NBRC 15051 / NCIMB 9469 / D465).